The following is a 532-amino-acid chain: Intercellular adhesion molecule 1 (532 aa).

The N-terminal stretch at methionine 1–alanine 27 is a signal peptide. Residues glutamine 28–glutamate 480 lie on the Extracellular side of the membrane. 2 consecutive Ig-like C2-type domains span residues glycine 41–alanine 103 and glycine 128–arginine 193. 3 disulfides stabilise this stretch: cysteine 48–cysteine 92, cysteine 52–cysteine 96, and cysteine 135–cysteine 186. Asparagine 145 carries an N-linked (GlcNAc...) asparagine glycan. Residues arginine 152–glutamate 154 carry the Cell attachment site; atypical motif. Asparagine 183, asparagine 202, asparagine 267, and asparagine 296 each carry an N-linked (GlcNAc...) asparagine glycan. 2 Ig-like C2-type domains span residues aspartate 230–glutamine 297 and glycine 325–alanine 378. A disulfide bridge links cysteine 237 with cysteine 290. A disulfide bridge links cysteine 332 with cysteine 371. N-linked (GlcNAc...) asparagine glycans are attached at residues asparagine 385 and asparagine 406. Disulfide bonds link cysteine 403–cysteine 419, cysteine 419–cysteine 457, and cysteine 431–cysteine 457. Residues asparagine 412–glycine 464 form the Ig-like C2-type 5 domain. Residues isoleucine 481–tyrosine 503 form a helical membrane-spanning segment. Residues asparagine 504–proline 532 lie on the Cytoplasmic side of the membrane. Threonine 521 and threonine 530 each carry phosphothreonine.

It belongs to the immunoglobulin superfamily. ICAM family. In terms of assembly, homodimer. Interacts with MUC1 and promotes cell aggregation in epithelial cells. Interacts with ARHGEF26/SGEF. Interacts (on T cell side) with CD81, CD247 and CD9 at immunological synapses between antigen-presenting cells and T cells. Post-translationally, monoubiquitinated, which is promoted by MARCH9 and leads to endocytosis.

Its subcellular location is the membrane. Functionally, ICAM proteins are ligands for the leukocyte adhesion protein LFA-1 (integrin alpha-L/beta-2). During leukocyte trans-endothelial migration, ICAM1 engagement promotes the assembly of endothelial apical cups through ARHGEF26/SGEF and RHOG activation. The sequence is that of Intercellular adhesion molecule 1 (ICAM1) from Pan troglodytes (Chimpanzee).